The sequence spans 102 residues: Citrate lyase acyl carrier protein (102 aa).

The residue at position 14 (Ser-14) is an O-(phosphoribosyl dephospho-coenzyme A)serine.

It belongs to the CitD family. In terms of assembly, oligomer with a subunit composition of (alpha,beta,gamma)6.

The protein resides in the cytoplasm. Its function is as follows. Covalent carrier of the coenzyme of citrate lyase. The protein is Citrate lyase acyl carrier protein of Streptococcus equi subsp. equi (strain 4047).